Reading from the N-terminus, the 239-residue chain is 7-cyano-7-deazaguanine synthase (239 aa).

13–23 serves as a coordination point for ATP; that stretch reads LSGGQDSATCL. Cys199, Cys214, Cys217, and Cys220 together coordinate Zn(2+).

The protein belongs to the QueC family. It depends on Zn(2+) as a cofactor.

It carries out the reaction 7-carboxy-7-deazaguanine + NH4(+) + ATP = 7-cyano-7-deazaguanine + ADP + phosphate + H2O + H(+). It functions in the pathway purine metabolism; 7-cyano-7-deazaguanine biosynthesis. Its function is as follows. Catalyzes the ATP-dependent conversion of 7-carboxy-7-deazaguanine (CDG) to 7-cyano-7-deazaguanine (preQ(0)). The chain is 7-cyano-7-deazaguanine synthase from Acidovorax ebreus (strain TPSY) (Diaphorobacter sp. (strain TPSY)).